We begin with the raw amino-acid sequence, 305 residues long: Ornithine carbamoyltransferase (305 aa).

Carbamoyl phosphate is bound by residues 54-57 (STRT), Gln81, Arg105, and 132-135 (HPCQ). L-ornithine contacts are provided by residues Asn163, Asp223, and 227–228 (SM). Residues 262–263 (CL) and Arg290 each bind carbamoyl phosphate.

It belongs to the aspartate/ornithine carbamoyltransferase superfamily. OTCase family.

The protein resides in the cytoplasm. It catalyses the reaction carbamoyl phosphate + L-ornithine = L-citrulline + phosphate + H(+). It participates in amino-acid biosynthesis; L-arginine biosynthesis; L-arginine from L-ornithine and carbamoyl phosphate: step 1/3. In terms of biological role, reversibly catalyzes the transfer of the carbamoyl group from carbamoyl phosphate (CP) to the N(epsilon) atom of ornithine (ORN) to produce L-citrulline. This is Ornithine carbamoyltransferase from Agrobacterium fabrum (strain C58 / ATCC 33970) (Agrobacterium tumefaciens (strain C58)).